A 196-amino-acid chain; its full sequence is ECF RNA polymerase sigma factor SigK (196 aa).

The tract at residues 39 to 105 (YDQTRARVYG…RAVDRVRSEQ (67 aa)) is sigma-70 factor domain-2. The short motif at 62–65 (ETTQ) is the Polymerase core binding element. The interval 142 to 191 (CLDSLTDVQRECIQLAYYDGLTYAQVADRLAANLATIKSRMRDGIRALRK) is sigma-70 factor domain-4. The H-T-H motif DNA-binding region spans 164–183 (YAQVADRLAANLATIKSRMR).

It belongs to the sigma-70 factor family. ECF subfamily. In terms of assembly, interacts transiently with the RNA polymerase catalytic core formed by RpoA, RpoB, RpoC and RpoZ (2 alpha, 1 beta, 1 beta' and 1 omega subunit) to form the RNA polymerase holoenzyme that can initiate transcription. Interacts (via sigma-70 factor domain 4) with anti-sigma-K factor RskA.

Its function is as follows. Sigma factors are initiation factors that promote the attachment of RNA polymerase to specific initiation sites and are then released. Extracytoplasmic function (ECF) sigma factors are held in an inactive form by an anti-sigma factor until released by regulated intramembrane proteolysis. The chain is ECF RNA polymerase sigma factor SigK (sigK) from Mycolicibacterium vanbaalenii (strain DSM 7251 / JCM 13017 / BCRC 16820 / KCTC 9966 / NRRL B-24157 / PYR-1) (Mycobacterium vanbaalenii).